Reading from the N-terminus, the 578-residue chain is MEVKGEIYRVSGPVVTAIGLQAKMYDLVKVGNEGLMGEVIQILGPKTIIQVYEETAGIKPGEPCVSTGSSLSVELGPGLLSSIYDGVQRPLHVLLEKMGSFIQRGVSADGLDHKKLWDFKPIVKKGDSVKGGDVIGVVQETVNIEHKIMVPPDISGTISDIKSGNFTVVDTICTLTDGTELQMMQRWPVRRPRPVKAKLTPTRPLVTGMRILDGLFPVAKGGTAAIPGPFGSGKTVTQQSLAKWSDTEIVVYIGCGERGNEMADVLSEFPELEDPQTGRPLMERTVLIANTSNMPVAAREASVYTGITIAEYYRDMGLDVSLMADSTSRWAEAMREISSRLEEMPGEEGYPAYLSARLAEFYERAGVAESLCGETGSITVIGAVSPPGGDFSEPVTQNTLRIVKVFWALDAKLSQRRHFPAINWLNSYSLYKDSLNDWFADNVAPDYVPLRERAMEMLQTESELQEIVQLVGSDALPDDQQLLLEITRMLREIFLQQNAFHPVDAYSPFDQQYKILKAIMKWGDAAMDALKSGVPVTEIIKLESKNVLAKVKYEEKFDESMNAVLAQMDKEFASLRGR.

228-235 (GPFGSGKT) contributes to the ATP binding site.

It belongs to the ATPase alpha/beta chains family. Has multiple subunits with at least A(3), B(3), C, D, E, F, H, I and proteolipid K(x).

The protein resides in the cell membrane. The enzyme catalyses ATP + H2O + 4 H(+)(in) = ADP + phosphate + 5 H(+)(out). Produces ATP from ADP in the presence of a proton gradient across the membrane. The archaeal alpha chain is a catalytic subunit. Its function is as follows. Component of the A-type ATP synthase that produces ATP from ADP in the presence of a proton gradient across the membrane. The A chain is the catalytic subunit. This Methanosarcina barkeri protein is A-type ATP synthase subunit A.